We begin with the raw amino-acid sequence, 236 residues long: uncharacterized protein (236 aa).

The protein localises to the virion. This is an uncharacterized protein from Acanthamoeba polyphaga (Amoeba).